Here is a 400-residue protein sequence, read N- to C-terminus: Phosphoglycerate kinase (400 aa).

Substrate contacts are provided by residues 23–25, Arg-38, 61–64, Arg-120, and Arg-153; these read DLN and HFGR. ATP contacts are provided by residues Lys-203, Glu-325, and 355–358; that span reads GGDT.

It belongs to the phosphoglycerate kinase family. In terms of assembly, monomer.

Its subcellular location is the cytoplasm. It carries out the reaction (2R)-3-phosphoglycerate + ATP = (2R)-3-phospho-glyceroyl phosphate + ADP. It participates in carbohydrate degradation; glycolysis; pyruvate from D-glyceraldehyde 3-phosphate: step 2/5. This chain is Phosphoglycerate kinase, found in Methylorubrum extorquens (strain CM4 / NCIMB 13688) (Methylobacterium extorquens).